The following is an 87-amino-acid chain: Cell division topological specificity factor (87 aa).

This sequence belongs to the MinE family.

Its function is as follows. Prevents the cell division inhibition by proteins MinC and MinD at internal division sites while permitting inhibition at polar sites. This ensures cell division at the proper site by restricting the formation of a division septum at the midpoint of the long axis of the cell. The sequence is that of Cell division topological specificity factor from Acidiphilium cryptum (strain JF-5).